The primary structure comprises 379 residues: NADH-quinone oxidoreductase subunit D 1 (379 aa).

It belongs to the complex I 49 kDa subunit family. As to quaternary structure, NDH-1 is composed of 14 different subunits. Subunits NuoB, C, D, E, F, and G constitute the peripheral sector of the complex.

Its subcellular location is the cell inner membrane. The enzyme catalyses a quinone + NADH + 5 H(+)(in) = a quinol + NAD(+) + 4 H(+)(out). Functionally, NDH-1 shuttles electrons from NADH, via FMN and iron-sulfur (Fe-S) centers, to quinones in the respiratory chain. The immediate electron acceptor for the enzyme in this species is believed to be ubiquinone. Couples the redox reaction to proton translocation (for every two electrons transferred, four hydrogen ions are translocated across the cytoplasmic membrane), and thus conserves the redox energy in a proton gradient. This chain is NADH-quinone oxidoreductase subunit D 1, found in Anaeromyxobacter sp. (strain K).